Here is a 126-residue protein sequence, read N- to C-terminus: Large ribosomal subunit protein bL12 (126 aa).

It belongs to the bacterial ribosomal protein bL12 family. In terms of assembly, homodimer. Part of the ribosomal stalk of the 50S ribosomal subunit. Forms a multimeric L10(L12)X complex, where L10 forms an elongated spine to which 2 to 4 L12 dimers bind in a sequential fashion. Binds GTP-bound translation factors.

Its function is as follows. Forms part of the ribosomal stalk which helps the ribosome interact with GTP-bound translation factors. Is thus essential for accurate translation. This is Large ribosomal subunit protein bL12 from Geobacter sp. (strain M21).